Reading from the N-terminus, the 333-residue chain is UDP-N-acetylglucosamine 4,6-dehydratase (inverting) (333 aa).

NADP(+) contacts are provided by residues 19–22 (TGSF), 43–48 (SRDELK), 67–68 (DV), Ala87, Lys91, and 129–130 (LS). Residue Lys91 participates in substrate binding. The active site involves Lys133. NADP(+) is bound by residues Tyr141 and Lys145. Asn173 serves as a coordination point for substrate. 174 to 178 (VVGSR) contacts NADP(+). The substrate site is built by Val181, Thr199, Arg258, and Glu261.

It belongs to the polysaccharide synthase family. As to quaternary structure, homohexamer. It depends on NADP(+) as a cofactor.

It catalyses the reaction UDP-N-acetyl-alpha-D-glucosamine = UDP-2-acetamido-2,6-dideoxy-beta-L-arabino-hex-4-ulose + H2O. Catalyzes the first step in the biosynthesis of pseudaminic acid, a sialic-acid-like sugar that is used to modify flagellin. Has both C6 dehydratase and C5 epimerase activities that result in the production of both UDP-2-acetamido-2,6-dideoxy-beta-L-arabino-4-hexulose and UDP-2-acetamido-2,6-dideoxy-alpha-D-xylo-4-hexulose. The protein is UDP-N-acetylglucosamine 4,6-dehydratase (inverting) (pseB) of Helicobacter pylori (strain ATCC 700392 / 26695) (Campylobacter pylori).